Consider the following 438-residue polypeptide: Gamma-glutamyl phosphate reductase (438 aa).

The protein belongs to the gamma-glutamyl phosphate reductase family.

The protein localises to the cytoplasm. It catalyses the reaction L-glutamate 5-semialdehyde + phosphate + NADP(+) = L-glutamyl 5-phosphate + NADPH + H(+). It participates in amino-acid biosynthesis; L-proline biosynthesis; L-glutamate 5-semialdehyde from L-glutamate: step 2/2. In terms of biological role, catalyzes the NADPH-dependent reduction of L-glutamate 5-phosphate into L-glutamate 5-semialdehyde and phosphate. The product spontaneously undergoes cyclization to form 1-pyrroline-5-carboxylate. The polypeptide is Gamma-glutamyl phosphate reductase (Natronomonas pharaonis (strain ATCC 35678 / DSM 2160 / CIP 103997 / JCM 8858 / NBRC 14720 / NCIMB 2260 / Gabara) (Halobacterium pharaonis)).